The sequence spans 949 residues: Valine--tRNA ligase (949 aa).

Positions 45-55 match the 'HIGH' region motif; the sequence is PNVTGVLHMGH. The short motif at 561-565 is the 'KMSKS' region element; it reads KMSKS. Position 564 (K564) interacts with ATP. A coiled-coil region spans residues 882–949; it reads EELLKQEKTR…EIKEKLMTLP (68 aa).

This sequence belongs to the class-I aminoacyl-tRNA synthetase family. ValS type 1 subfamily. Monomer.

The protein localises to the cytoplasm. The enzyme catalyses tRNA(Val) + L-valine + ATP = L-valyl-tRNA(Val) + AMP + diphosphate. In terms of biological role, catalyzes the attachment of valine to tRNA(Val). As ValRS can inadvertently accommodate and process structurally similar amino acids such as threonine, to avoid such errors, it has a 'posttransfer' editing activity that hydrolyzes mischarged Thr-tRNA(Val) in a tRNA-dependent manner. The chain is Valine--tRNA ligase from Protochlamydia amoebophila (strain UWE25).